Consider the following 92-residue polypeptide: Large ribosomal subunit protein bL25 (92 aa).

The protein belongs to the bacterial ribosomal protein bL25 family. In terms of assembly, part of the 50S ribosomal subunit; part of the 5S rRNA/L5/L18/L25 subcomplex. Contacts the 5S rRNA. Binds to the 5S rRNA independently of L5 and L18.

Its function is as follows. This is one of the proteins that binds to the 5S RNA in the ribosome where it forms part of the central protuberance. The sequence is that of Large ribosomal subunit protein bL25 from Aliivibrio fischeri (strain ATCC 700601 / ES114) (Vibrio fischeri).